We begin with the raw amino-acid sequence, 310 residues long: Beta-carotene 3-hydroxylase 1, chloroplastic (310 aa).

The transit peptide at Met1 to Val51 directs the protein to the chloroplast. 2 helical membrane passes run Tyr98–Tyr118 and Met132–Trp152. In terms of domain architecture, Fatty acid hydroxylase spans Ala145–Phe272. Residues His157–His162 carry the Histidine box-1 motif. The Histidine box-2 motif lies at His169–His173. The next 2 membrane-spanning stretches (helical) occupy residues Asn183–Phe203 and Val208–Phe228. Positions His230–His235 match the Histidine box-3 motif. The short motif at His256 to His260 is the Histidine box-4 element.

The protein belongs to the sterol desaturase family. As to quaternary structure, homodimer. Expressed in leaves, flowers, stems, roots and siliques.

Its subcellular location is the plastid. The protein resides in the chloroplast membrane. The catalysed reaction is all-trans-beta-carotene + 4 reduced [2Fe-2S]-[ferredoxin] + 2 O2 + 4 H(+) = all-trans-zeaxanthin + 4 oxidized [2Fe-2S]-[ferredoxin] + 2 H2O. In terms of biological role, nonheme diiron monooxygenase involved in the biosynthesis of xanthophylls. Specific for beta-ring hydroxylations of beta-carotene. Also has a low activity toward the beta- and epsilon-rings of alpha-carotene. No activity with acyclic carotenoids such as lycopene and neurosporene. Uses ferredoxin as an electron donor. The chain is Beta-carotene 3-hydroxylase 1, chloroplastic (BETA-OHASE 1) from Arabidopsis thaliana (Mouse-ear cress).